Here is a 393-residue protein sequence, read N- to C-terminus: Ornithine decarboxylase 2 (393 aa).

At Lys62 the chain carries N6-(pyridoxal phosphate)lysine. Pyridoxal 5'-phosphate-binding positions include Ser194, Gly231, and 265–268 (EPGR). 314–315 (YY) contacts substrate. The active-site Proton donor; shared with dimeric partner is Cys343. Asp344 is a binding site for substrate. Tyr371 lines the pyridoxal 5'-phosphate pocket.

The protein belongs to the Orn/Lys/Arg decarboxylase class-II family. Homodimer. Only the dimer is catalytically active, as the active sites are constructed of residues from both monomers. It depends on pyridoxal 5'-phosphate as a cofactor.

The catalysed reaction is L-ornithine + H(+) = putrescine + CO2. Its pathway is amine and polyamine biosynthesis; putrescine biosynthesis via L-ornithine pathway; putrescine from L-ornithine: step 1/1. With respect to regulation, inhibited by antizyme (AZ) in response to polyamine levels. AZ inhibits the assembly of the functional homodimer by binding to ODC monomers and targeting them for ubiquitin-independent proteolytic destruction by the 26S proteasome. Functionally, catalyzes the first and rate-limiting step of polyamine biosynthesis that converts ornithine into putrescine, which is the precursor for the polyamines, spermidine and spermine. Polyamines are essential for cell proliferation and are implicated in cellular processes, ranging from DNA replication to apoptosis. This chain is Ornithine decarboxylase 2 (Odc2), found in Drosophila melanogaster (Fruit fly).